The primary structure comprises 288 residues: Bifunctional protein FolD (288 aa).

NADP(+)-binding positions include 166–168 (GAS) and I232.

It belongs to the tetrahydrofolate dehydrogenase/cyclohydrolase family. As to quaternary structure, homodimer.

It catalyses the reaction (6R)-5,10-methylene-5,6,7,8-tetrahydrofolate + NADP(+) = (6R)-5,10-methenyltetrahydrofolate + NADPH. The enzyme catalyses (6R)-5,10-methenyltetrahydrofolate + H2O = (6R)-10-formyltetrahydrofolate + H(+). Its pathway is one-carbon metabolism; tetrahydrofolate interconversion. Functionally, catalyzes the oxidation of 5,10-methylenetetrahydrofolate to 5,10-methenyltetrahydrofolate and then the hydrolysis of 5,10-methenyltetrahydrofolate to 10-formyltetrahydrofolate. The sequence is that of Bifunctional protein FolD from Shigella dysenteriae serotype 1 (strain Sd197).